A 259-amino-acid chain; its full sequence is Indole-diterpene biosynthesis cluster protein S (259 aa).

Transmembrane regions (helical) follow at residues 5-25 (EASG…GMVW), 64-84 (WFAL…AIIL), 87-107 (VYLI…LWVL), 134-154 (VLWF…AASF), and 221-241 (LGAG…PAAG).

This sequence belongs to the ltmS family.

Its subcellular location is the membrane. In terms of biological role, part of the gene cluster that mediates the biosynthesis of paspalitrems, indole-diterpene (IDT) mycotoxins that are potent tremorgens in mammals. The geranylgeranyl diphosphate (GGPP) synthase idtG is proposed to catalyze the first step in IDT biosynthesis via catalysis of a series of iterative condensations of isopentenyl diphosphate (IPP) with dimethylallyl diphosphate (DMAPP), geranyl diphosphate (GPP), and farnesyl diphosphate (FPP), to form GGPP. Condensation of indole-3-glycerol phosphate with GGPP by the prenyltransferase idtC then forms 3-geranylgeranylindole (3-GGI). Epoxidation of the two terminal alkenes of the geranylgeranyl moiety by the FAD-dependent monooxygenase idtM, and cyclization by the terpene cyclase idtB then leads to the production of paspaline. The cytochrome P450 monooxygenase idtP then catalyzes oxidative elimination of the pendant methyl group at C-12 of paspaline and generates the C-10 ketone to yield 13-desoxypaxilline. The cytochrome P450 monooxygenase idtQ may catalyze the C-13 oxidation of 13-desoxypaxilline to afford paxilline. Considering that both paspalicine and paxilline were detected in C.paspali, idtQ also catalyzes the formation of paspalinine from 13-desoxypaxilline via paspalicine as an intermediate. Finally, the alpha-prenyltransferase idtF prenylates paspalinine at the C-20 or the C-21 positions to yield paspalitrems A and C, respectively. The hydroxylation of paspalitrem A at C-32 by a still unknown oxidase affords paspalitrem B. The chain is Indole-diterpene biosynthesis cluster protein S from Claviceps paspali (Rye ergot fungus).